A 328-amino-acid chain; its full sequence is Embigin (328 aa).

Positions methionine 1–glycine 33 are cleaved as a signal peptide. Residues aspartate 34–proline 264 lie on the Extracellular side of the membrane. N-linked (GlcNAc...) asparagine glycosylation is found at asparagine 55, asparagine 62, asparagine 75, asparagine 100, asparagine 117, asparagine 189, asparagine 196, asparagine 214, and asparagine 219. 2 consecutive Ig-like domains span residues glutamate 67–lysine 160 and proline 159–valine 254. 2 cysteine pairs are disulfide-bonded: cysteine 88-cysteine 144 and cysteine 180-cysteine 238. A helical membrane pass occupies residues phenylalanine 265–tyrosine 285. At threonine 286–glutamine 328 the chain is on the cytoplasmic side. Residues lysine 289–aspartate 309 are compositionally biased toward basic and acidic residues. Residues lysine 289–glutamine 328 are disordered. Serine 310 bears the Phosphoserine mark.

As to quaternary structure, interacts with SLC16A1, SLC16A6 and SLC16A7. Post-translationally, N-glycosylated. Detected in prostate, mammary gland and erythrocytes (at protein level). Detected in testis, brain, prostate, heart, kidney, liver, mammary gland and lung.

The protein resides in the cell membrane. The protein localises to the synapse. In terms of biological role, plays a role in the outgrowth of motoneurons and in the formation of neuromuscular junctions. Following muscle denervation, promotes nerve terminal sprouting and the formation of additional acetylcholine receptor clusters at synaptic sites without affecting terminal Schwann cell number or morphology. Delays the retraction of terminal sprouts following re-innervation of denervated endplates. Plays a role in targeting the monocarboxylate transporters SLC16A1, SLC16A6 and SLC16A7 to the cell membrane. In Rattus norvegicus (Rat), this protein is Embigin (Emb).